The primary structure comprises 448 residues: MAAPTLGHLVLTHLLVALLGMGSWAAVNGIWVELPVVVKHLPEGWSLPSYLSVVVALGNLGLLVVTLWRRLAPGKGERVPIQVVQVLSVVGTALLAPLWHHVAPVAGQLHSVAFLTLALVLALACCTSNVTFLPFLSHLPPPFLRSFFLGQGLSALLPCVLALVQGVGRLECSPAPTNGTSGPPLNFPERFPASTFYWALTALLVTSAAAFQGLLLLLPSLPSVTTGGAGPELPLGSPGAEEEEKEEEEALPLQEPPSQAAGTIPGPDPEAHQLFSAHGAFLLGLLAITSALTNGVLPAVQSFSCLPYGRLAYHLAVVLGSAANPLACFLAMGVLCRSLAGLVGLSLLGMLFGAYLMVLAILSPCPPLVGTTAGVVLVVLSWVLCLCVFSYVKVAASSLLHGGGRPALLAAGVAIQMGSLLGAGTMFPPTSIYHVFQSRKDCVDPCGP.

The next 5 membrane-spanning stretches (helical) occupy residues 14–34, 47–67, 79–99, 105–125, and 147–167; these read LLVA…WVEL, LPSY…VVTL, VPIQ…APLW, VAGQ…ALAC, and FFLG…VQGV. N178 carries an N-linked (GlcNAc...) asparagine glycan. The helical transmembrane segment at 198-218 threads the bilayer; that stretch reads WALTALLVTSAAAFQGLLLLL. A disordered region spans residues 228–267; that stretch reads GAGPELPLGSPGAEEEEKEEEEALPLQEPPSQAAGTIPGP. Acidic residues predominate over residues 240 to 250; the sequence is AEEEEKEEEEA. The next 5 membrane-spanning stretches (helical) occupy residues 280–300, 315–335, 342–362, 369–389, and 407–427; these read AFLL…LPAV, LAVV…MGVL, LVGL…LAIL, VGTT…LCVF, and ALLA…GTMF.

This sequence belongs to the riboflavin transporter family.

It localises to the cell membrane. The enzyme catalyses riboflavin(in) = riboflavin(out). Its activity is regulated as follows. Riboflavin transport is Na(+)-independent but moderately pH-sensitive. Activity is strongly inhibited by riboflavin analogs, such as lumiflavin. Weakly inhibited by flavin adenine dinucleotide (FAD) and flavin mononucleotide (FMN). In terms of biological role, plasma membrane transporter mediating the uptake by cells of the water soluble vitamin B2/riboflavin that plays a key role in biochemical oxidation-reduction reactions of the carbohydrate, lipid, and amino acid metabolism. May also act as a receptor for 4-hydroxybutyrate. Functionally, (Microbial infection) In case of infection by retroviruses, acts as a cell receptor to retroviral envelopes similar to the porcine endogenous retrovirus (PERV-A). This Papio hamadryas (Hamadryas baboon) protein is Solute carrier family 52, riboflavin transporter, member 2 (SLC52A2).